Reading from the N-terminus, the 188-residue chain is Dual specificity protein phosphatase 18 (188 aa).

Residues 19-160 (GLSQITKSLY…LIHYEFQLFG (142 aa)) form the Tyrosine-protein phosphatase domain. The Phosphocysteine intermediate role is filled by Cys104.

This sequence belongs to the protein-tyrosine phosphatase family. Non-receptor class dual specificity subfamily. Widely expressed with highest levels in liver, brain, ovary and testis.

Its subcellular location is the cytoplasm. The protein resides in the nucleus. It localises to the mitochondrion inner membrane. The catalysed reaction is O-phospho-L-tyrosyl-[protein] + H2O = L-tyrosyl-[protein] + phosphate. The enzyme catalyses O-phospho-L-seryl-[protein] + H2O = L-seryl-[protein] + phosphate. It catalyses the reaction O-phospho-L-threonyl-[protein] + H2O = L-threonyl-[protein] + phosphate. With respect to regulation, activated by manganese ions, inhibited by iodoacetic acid. In terms of biological role, can dephosphorylate single and diphosphorylated synthetic MAPK peptides, with preference for the phosphotyrosine and diphosphorylated forms over phosphothreonine. In vitro, dephosphorylates p-nitrophenyl phosphate (pNPP). In Homo sapiens (Human), this protein is Dual specificity protein phosphatase 18 (DUSP18).